A 107-amino-acid polypeptide reads, in one-letter code: Probable monothiol glutaredoxin 2 (107 aa).

Residues 7 to 107 (LEFIQNAIKK…LEKMLKDVVV (101 aa)) enclose the Glutaredoxin domain. Lys-24 contacts glutathione. Cys-32 serves as a coordination point for [2Fe-2S] cluster. Residues Arg-61, Phe-73, and 86 to 87 (CD) each bind glutathione.

Belongs to the glutaredoxin family. Monothiol subfamily.

The sequence is that of Probable monothiol glutaredoxin 2 (grxC2) from Rickettsia prowazekii (strain Madrid E).